Reading from the N-terminus, the 140-residue chain is Transcription antitermination protein NusB (140 aa).

This sequence belongs to the NusB family.

In terms of biological role, involved in transcription antitermination. Required for transcription of ribosomal RNA (rRNA) genes. Binds specifically to the boxA antiterminator sequence of the ribosomal RNA (rrn) operons. This is Transcription antitermination protein NusB from Streptococcus pneumoniae serotype 2 (strain D39 / NCTC 7466).